The sequence spans 304 residues: D-alanine--D-alanine ligase (304 aa).

The region spanning 103–299 (KLIWQALGLP…FADLCIEILK (197 aa)) is the ATP-grasp domain. 129–184 (EEKLGLPMFVKPAAEGSSVGVVKVKGKGRLKSVYEELKHLQGEIIAERFIGGGEYS) is an ATP binding site. Mg(2+) is bound by residues D253, E266, and N268.

This sequence belongs to the D-alanine--D-alanine ligase family. Mg(2+) serves as cofactor. Requires Mn(2+) as cofactor.

It localises to the cytoplasm. It carries out the reaction 2 D-alanine + ATP = D-alanyl-D-alanine + ADP + phosphate + H(+). The protein operates within cell wall biogenesis; peptidoglycan biosynthesis. Cell wall formation. This chain is D-alanine--D-alanine ligase, found in Neisseria meningitidis serogroup B (strain ATCC BAA-335 / MC58).